The following is a 434-amino-acid chain: UPF0597 protein CLD_2616 (434 aa).

This sequence belongs to the UPF0597 family.

The chain is UPF0597 protein CLD_2616 from Clostridium botulinum (strain Okra / Type B1).